Here is a 422-residue protein sequence, read N- to C-terminus: MVSESHHEALAAPPVTTVATVLPSNATEPASPGEGKEDAFSKLKEKFMNELHKIPLPPWALIAIAIVAVLLVLTCCFCICKKCLFKKKNKKKGKEKGGKNAINMKDVKDLGKTMKDQALKDDDAETGLTDGEEKEEPKEEEKLGKLQYSLDYDFQNNQLLVGIIQAAELPALDMGGTSDPYVKVFLLPDKKKKFETKVHRKTLNPVFNEQFTFKVPYSELGGKTLVMAVYDFDRFSKHDIIGEFKVPMNTVDFGHVTEEWRDLQSAEKEEQEKLGDICFSLRYVPTAGKLTVVILEAKNLKKMDVGGLSDPYVKIHLMQNGKRLKKKKTTIKKNTLNPYYNESFSFEVPFEQIQKVQVVVTVLDYDKIGKNDAIGKVFVGYNSTGAELRHWSDMLANPRRPIAQWHTLQVEEEVDAMLAVKK.

The Vesicular segment spans residues 1 to 57 (MVSESHHEALAAPPVTTVATVLPSNATEPASPGEGKEDAFSKLKEKFMNELHKIPLP). Asn-25 carries an N-linked (GlcNAc...) asparagine glycan. A helical transmembrane segment spans residues 58-80 (PWALIAIAIVAVLLVLTCCFCIC). S-palmitoyl cysteine attachment occurs at residues Cys-75, Cys-76, Cys-78, Cys-80, and Cys-83. The Cytoplasmic portion of the chain corresponds to 81-422 (KKCLFKKKNK…EVDAMLAVKK (342 aa)). The tract at residues 113–142 (TMKDQALKDDDAETGLTDGEEKEEPKEEEK) is disordered. Acidic residues predominate over residues 122–134 (DDAETGLTDGEEK). Thr-129 bears the Phosphothreonine mark. Positions 136 to 382 (EPKEEEKLGK…AIGKVFVGYN (247 aa)) are phospholipid binding. One can recognise a C2 1 domain in the interval 142 to 261 (KLGKLQYSLD…DFGHVTEEWR (120 aa)). Positions 172, 173, and 179 each coordinate Ca(2+). A Phosphotyrosine modification is found at Tyr-230. Asp-231, Phe-232, Asp-233, Ser-236, Lys-237, and Asp-239 together coordinate Ca(2+). The residue at position 265 (Ser-265) is a Phosphoserine. A C2 2 domain is found at 273–406 (KLGDICFSLR…NPRRPIAQWH (134 aa)). Residues Asp-304 and Asp-310 each coordinate Ca(2+). Phosphoserine is present on residues Ser-343 and Ser-345. The Ca(2+) site is built by Asp-364, Asp-366, and Asp-372.

Belongs to the synaptotagmin family. As to quaternary structure, homotetramer. Heterodimer; heterodimerizes with SYT2 in presence of calcium. Interacts with SCAMP5. Interacts with STON2. Forms a complex with SV2B, syntaxin 1 and SNAP25. Interacts with SV2A, SV2B and SV2C. Interacts with RIMS1. Interacts with PRRT2. Interacts with DNAJC5 in a phosphorylation-dependent manner. Interacts (via N-terminus) with RAB3A. Interacts with SYT12. Interacts with calmodulin. Interacts with DNM1 (via C-terminal proline-rich domain (PRD)); this interaction facilitates vesicle fission during clathrin-mediated endocytosis (CME). It depends on Ca(2+) as a cofactor. Glycosylated. Expressed in melanocytes.

Its subcellular location is the cytoplasmic vesicle. It localises to the secretory vesicle membrane. The protein resides in the secretory vesicle. The protein localises to the synaptic vesicle membrane. It is found in the chromaffin granule membrane. Its subcellular location is the cytoplasm. Functionally, calcium sensor that participates in triggering neurotransmitter release at the synapse. May have a regulatory role in the membrane interactions during trafficking of synaptic vesicles at the active zone of the synapse. It binds acidic phospholipids with a specificity that requires the presence of both an acidic head group and a diacyl backbone. A Ca(2+)-dependent interaction between synaptotagmin and putative receptors for activated protein kinase C has also been reported. It can bind to at least three additional proteins in a Ca(2+)-independent manner; these are neurexins, syntaxin and AP2. Plays a role in dendrite formation by melanocytes. This chain is Synaptotagmin-1, found in Homo sapiens (Human).